The sequence spans 382 residues: Histone acetyltransferase type B subunit 2 (382 aa).

WD repeat units follow at residues 98-138 (ENNA…RYSH), 141-181 (PHTK…TTFK), 184-224 (IQKD…VVSQ), 228-268 (ESSN…ENSG), and 275-315 (GHSE…EEQQ). The segment at 317-321 (EDAED) is interaction with the histone H4 N-terminus. Residues 332–372 (GHTAGVSDLSWCPFKDWMIGSVADDNIVHLWEISKKLITNE) form a WD 6 repeat.

This sequence belongs to the WD repeat RBAP46/RBAP48/MSI1 family. As to quaternary structure, component of the HAT-B complex composed of at least HAT1 and HAT2. The HAT-B complex binds to histone H4 tail.

It is found in the cytoplasm. Its subcellular location is the nucleus. Regulatory subunit of the histone acetylase B (HAT-B) complex. The complex acetylates 'Lys-14' of histone H4 which is required for telomeric silencing. This is Histone acetyltransferase type B subunit 2 (HAT2) from Candida albicans (strain SC5314 / ATCC MYA-2876) (Yeast).